A 622-amino-acid polypeptide reads, in one-letter code: Arginine--tRNA ligase (622 aa).

The short motif at 127–137 (ANPVHPLHVGH) is the 'HIGH' region element.

It belongs to the class-I aminoacyl-tRNA synthetase family.

Its subcellular location is the cytoplasm. The catalysed reaction is tRNA(Arg) + L-arginine + ATP = L-arginyl-tRNA(Arg) + AMP + diphosphate. The polypeptide is Arginine--tRNA ligase (Ignicoccus hospitalis (strain KIN4/I / DSM 18386 / JCM 14125)).